We begin with the raw amino-acid sequence, 435 residues long: Trigger factor (435 aa).

The segment at 125-147 (MEVPEQDTSVSDADVDSELENKR) is disordered. A PPIase FKBP-type domain is found at 164–249 (GDTVVIDYEG…IHEVKEKQLP (86 aa)).

Belongs to the FKBP-type PPIase family. Tig subfamily.

It is found in the cytoplasm. It catalyses the reaction [protein]-peptidylproline (omega=180) = [protein]-peptidylproline (omega=0). Involved in protein export. Acts as a chaperone by maintaining the newly synthesized protein in an open conformation. Functions as a peptidyl-prolyl cis-trans isomerase. The protein is Trigger factor of Limosilactobacillus fermentum (strain NBRC 3956 / LMG 18251) (Lactobacillus fermentum).